We begin with the raw amino-acid sequence, 1118 residues long: Protein SUPPRESSOR OF NPR1-1 CONSTITUTIVE 4 (1118 aa).

The N-terminal stretch at 1-35 (MNSQQSTRTKQMLQQSSTHLLCGVVLLQLFAAQVD) is a signal peptide. The Extracellular portion of the chain corresponds to 36-751 (AQRSTSPWQT…PLRNFLKVIR (716 aa)). Residues 51 to 353 (PLVIARGGFS…DFPLTASASV (303 aa)) form the GP-PDE 1 domain. 13 N-linked (GlcNAc...) asparagine glycosylation sites follow: Asn106, Asn195, Asn251, Asn260, Asn318, Asn335, Asn362, Asn422, Asn433, Asn497, Asn557, Asn573, and Asn656. The 302-residue stretch at 369–670 (FLVISKNGAS…EFPYTAARYK (302 aa)) folds into the GP-PDE 2 domain. A helical membrane pass occupies residues 752–772 (IVSWSVAGVVLFLVLLTLVFC). The Cytoplasmic segment spans residues 773–1118 (FHRKRETRLR…SEDVSVYTEG (346 aa)). The Protein kinase domain occupies 805-1094 (KSFAEVVGRG…ALEVPPRPVL (290 aa)). Residues 811–819 (VGRGGFGIV) and Lys833 contribute to the ATP site. Residue Asp928 is the Proton acceptor of the active site.

In the N-terminal section; belongs to the glycerophosphoryl diester phosphodiesterase family. It in the C-terminal section; belongs to the protein kinase superfamily. Ser/Thr protein kinase family. In terms of tissue distribution, expressed in shoots, rosette and cauline leaves, stems, flowers and siliques.

It is found in the cell membrane. The catalysed reaction is a sn-glycero-3-phosphodiester + H2O = an alcohol + sn-glycerol 3-phosphate + H(+). It catalyses the reaction L-seryl-[protein] + ATP = O-phospho-L-seryl-[protein] + ADP + H(+). It carries out the reaction L-threonyl-[protein] + ATP = O-phospho-L-threonyl-[protein] + ADP + H(+). In terms of biological role, atypical receptor-like kinase involved in disease resistance. This Arabidopsis thaliana (Mouse-ear cress) protein is Protein SUPPRESSOR OF NPR1-1 CONSTITUTIVE 4.